Consider the following 333-residue polypeptide: Type II restriction enzyme XcyI (333 aa).

Belongs to the XcyI type II restriction endonuclease family. In terms of assembly, monomer. It depends on Mg(2+) as a cofactor.

The enzyme catalyses Endonucleolytic cleavage of DNA to give specific double-stranded fragments with terminal 5'-phosphates.. Its function is as follows. A P subtype restriction enzyme that recognizes the double-stranded sequence 5'-CCCGGG-3' and cleaves after C-1. The chain is Type II restriction enzyme XcyI (xcyIR) from Xanthomonas campestris pv. cyanopsidis.